Consider the following 56-residue polypeptide: Trypsin inhibitor 1 (56 aa).

Positions 1-25 (MATTMAKLITLVVLAILAFVEVSVS) are cleaved as a signal peptide. A propeptide spanning residues 26 to 39 (GYKTSISTITIEDN) is cleaved from the precursor. A cross-link (cyclopeptide (Gly-Asp)) is located at residues 40–53 (GRCTKSIPPICFPD). An intrachain disulfide couples Cys-42 to Cys-50. Residues 54 to 56 (GRP) constitute a propeptide that is removed on maturation.

Post-translationally, this is a cyclic peptide.

Its function is as follows. Inhibits trypsin, cathepsin G, elastase, chymotrypsin and thrombin. Does not inhibit factor Xa. The sequence is that of Trypsin inhibitor 1 from Helianthus annuus (Common sunflower).